The primary structure comprises 120 residues: Small ribosomal subunit protein uS17m (120 aa).

The N-terminal 20 residues, 1–20 (MSIVRSSVHAKWVVGKVIGT), are a transit peptide targeting the mitochondrion.

The protein belongs to the universal ribosomal protein uS17 family. In terms of assembly, component of the mitochondrial ribosome small subunit (28S) which comprises a 12S rRNA and about 30 distinct proteins.

The protein localises to the mitochondrion. The polypeptide is Small ribosomal subunit protein uS17m (Mrps17) (Mus musculus (Mouse)).